The following is a 194-amino-acid chain: Xanthine phosphoribosyltransferase (194 aa).

The xanthine site is built by Leu20 and Asn27. Position 128–132 (128–132) interacts with 5-phospho-alpha-D-ribose 1-diphosphate; the sequence is ANGEA. Lys156 lines the xanthine pocket.

The protein belongs to the purine/pyrimidine phosphoribosyltransferase family. Xpt subfamily. Homodimer.

Its subcellular location is the cytoplasm. The enzyme catalyses XMP + diphosphate = xanthine + 5-phospho-alpha-D-ribose 1-diphosphate. The protein operates within purine metabolism; XMP biosynthesis via salvage pathway; XMP from xanthine: step 1/1. Its function is as follows. Converts the preformed base xanthine, a product of nucleic acid breakdown, to xanthosine 5'-monophosphate (XMP), so it can be reused for RNA or DNA synthesis. The chain is Xanthine phosphoribosyltransferase from Macrococcus caseolyticus (strain JCSC5402) (Macrococcoides caseolyticum).